A 96-amino-acid polypeptide reads, in one-letter code: MAKYEILYIIRPNIEEEAKNALVARFDSILTDNGATVVESKDWEKRRLAYEIQDFREGLYHIVNVEANDDVALKEFDRLSKINADILRHMIVKLDA.

The protein belongs to the bacterial ribosomal protein bS6 family.

Functionally, binds together with bS18 to 16S ribosomal RNA. This chain is Small ribosomal subunit protein bS6, found in Streptococcus gordonii (strain Challis / ATCC 35105 / BCRC 15272 / CH1 / DL1 / V288).